Here is a 260-residue protein sequence, read N- to C-terminus: Imidazole glycerol phosphate synthase subunit HisF (260 aa).

Active-site residues include Asp-11 and Asp-130.

It belongs to the HisA/HisF family. Heterodimer of HisH and HisF.

The protein localises to the cytoplasm. The enzyme catalyses 5-[(5-phospho-1-deoxy-D-ribulos-1-ylimino)methylamino]-1-(5-phospho-beta-D-ribosyl)imidazole-4-carboxamide + L-glutamine = D-erythro-1-(imidazol-4-yl)glycerol 3-phosphate + 5-amino-1-(5-phospho-beta-D-ribosyl)imidazole-4-carboxamide + L-glutamate + H(+). The protein operates within amino-acid biosynthesis; L-histidine biosynthesis; L-histidine from 5-phospho-alpha-D-ribose 1-diphosphate: step 5/9. In terms of biological role, IGPS catalyzes the conversion of PRFAR and glutamine to IGP, AICAR and glutamate. The HisF subunit catalyzes the cyclization activity that produces IGP and AICAR from PRFAR using the ammonia provided by the HisH subunit. This is Imidazole glycerol phosphate synthase subunit HisF from Endomicrobium trichonymphae.